The sequence spans 319 residues: Pantothenate kinase (319 aa).

97–104 (GSVAVGKS) provides a ligand contact to ATP.

The protein belongs to the prokaryotic pantothenate kinase family.

Its subcellular location is the cytoplasm. The catalysed reaction is (R)-pantothenate + ATP = (R)-4'-phosphopantothenate + ADP + H(+). It participates in cofactor biosynthesis; coenzyme A biosynthesis; CoA from (R)-pantothenate: step 1/5. The chain is Pantothenate kinase from Mesorhizobium japonicum (strain LMG 29417 / CECT 9101 / MAFF 303099) (Mesorhizobium loti (strain MAFF 303099)).